Consider the following 333-residue polypeptide: Adenosine deaminase (333 aa).

H12 and H14 together coordinate Zn(2+). Residues H14 and D16 each contribute to the substrate site. Pentostatin is bound by residues H14–D16, S141, and G170. Residue G170 coordinates substrate. H197 is a binding site for Zn(2+). Residues E200, H221, and D278 each coordinate pentostatin. E200 serves as the catalytic Proton donor. D278 contributes to the Zn(2+) binding site. D279 lines the substrate pocket.

It belongs to the metallo-dependent hydrolases superfamily. Adenosine and AMP deaminases family. Adenosine deaminase subfamily. The cofactor is Zn(2+).

The catalysed reaction is adenosine + H2O + H(+) = inosine + NH4(+). It carries out the reaction 2'-deoxyadenosine + H2O + H(+) = 2'-deoxyinosine + NH4(+). In terms of biological role, catalyzes the hydrolytic deamination of adenosine and 2-deoxyadenosine. The sequence is that of Adenosine deaminase from Salmonella typhimurium (strain LT2 / SGSC1412 / ATCC 700720).